Reading from the N-terminus, the 272-residue chain is Formamidopyrimidine-DNA glycosylase (272 aa).

Pro-2 serves as the catalytic Schiff-base intermediate with DNA. Glu-3 serves as the catalytic Proton donor. Lys-57 (proton donor; for beta-elimination activity) is an active-site residue. Residues His-90, Arg-109, and Lys-150 each coordinate DNA. Residues 235-269 (HVYGRAKKKCLLCSSIIQEEKIGQRNTFWCGHCQP) form an FPG-type zinc finger. Arg-259 (proton donor; for delta-elimination activity) is an active-site residue.

It belongs to the FPG family. Monomer. Zn(2+) serves as cofactor.

The enzyme catalyses Hydrolysis of DNA containing ring-opened 7-methylguanine residues, releasing 2,6-diamino-4-hydroxy-5-(N-methyl)formamidopyrimidine.. It carries out the reaction 2'-deoxyribonucleotide-(2'-deoxyribose 5'-phosphate)-2'-deoxyribonucleotide-DNA = a 3'-end 2'-deoxyribonucleotide-(2,3-dehydro-2,3-deoxyribose 5'-phosphate)-DNA + a 5'-end 5'-phospho-2'-deoxyribonucleoside-DNA + H(+). In terms of biological role, involved in base excision repair of DNA damaged by oxidation or by mutagenic agents. Acts as a DNA glycosylase that recognizes and removes damaged bases. Has a preference for oxidized purines, such as 7,8-dihydro-8-oxoguanine (8-oxoG). Has AP (apurinic/apyrimidinic) lyase activity and introduces nicks in the DNA strand. Cleaves the DNA backbone by beta-delta elimination to generate a single-strand break at the site of the removed base with both 3'- and 5'-phosphates. This is Formamidopyrimidine-DNA glycosylase from Aliivibrio fischeri (strain ATCC 700601 / ES114) (Vibrio fischeri).